A 415-amino-acid chain; its full sequence is Serine hydroxymethyltransferase (415 aa).

Residues L117 and 121-123 contribute to the (6S)-5,6,7,8-tetrahydrofolate site; that span reads GHL. N6-(pyridoxal phosphate)lysine is present on K225. (6S)-5,6,7,8-tetrahydrofolate contacts are provided by residues E241 and 349-351; that span reads SPF.

This sequence belongs to the SHMT family. As to quaternary structure, homodimer. It depends on pyridoxal 5'-phosphate as a cofactor.

It is found in the cytoplasm. The catalysed reaction is (6R)-5,10-methylene-5,6,7,8-tetrahydrofolate + glycine + H2O = (6S)-5,6,7,8-tetrahydrofolate + L-serine. It participates in one-carbon metabolism; tetrahydrofolate interconversion. Its pathway is amino-acid biosynthesis; glycine biosynthesis; glycine from L-serine: step 1/1. Its function is as follows. Catalyzes the reversible interconversion of serine and glycine with tetrahydrofolate (THF) serving as the one-carbon carrier. This reaction serves as the major source of one-carbon groups required for the biosynthesis of purines, thymidylate, methionine, and other important biomolecules. Also exhibits THF-independent aldolase activity toward beta-hydroxyamino acids, producing glycine and aldehydes, via a retro-aldol mechanism. The protein is Serine hydroxymethyltransferase of Campylobacter hominis (strain ATCC BAA-381 / DSM 21671 / CCUG 45161 / LMG 19568 / NCTC 13146 / CH001A).